We begin with the raw amino-acid sequence, 96 residues long: Integration host factor subunit beta (96 aa).

This sequence belongs to the bacterial histone-like protein family. Heterodimer of an alpha and a beta chain.

This protein is one of the two subunits of integration host factor, a specific DNA-binding protein that functions in genetic recombination as well as in transcriptional and translational control. In Photobacterium profundum (strain SS9), this protein is Integration host factor subunit beta.